The sequence spans 313 residues: Aspartate carbamoyltransferase catalytic subunit (313 aa).

The carbamoyl phosphate site is built by R51 and T52. K80 is an L-aspartate binding site. Positions 101, 129, and 132 each coordinate carbamoyl phosphate. Residues R162 and R224 each coordinate L-aspartate. Residues L263 and P264 each coordinate carbamoyl phosphate.

The protein belongs to the aspartate/ornithine carbamoyltransferase superfamily. ATCase family. In terms of assembly, heterododecamer (2C3:3R2) of six catalytic PyrB chains organized as two trimers (C3), and six regulatory PyrI chains organized as three dimers (R2).

The enzyme catalyses carbamoyl phosphate + L-aspartate = N-carbamoyl-L-aspartate + phosphate + H(+). It participates in pyrimidine metabolism; UMP biosynthesis via de novo pathway; (S)-dihydroorotate from bicarbonate: step 2/3. Catalyzes the condensation of carbamoyl phosphate and aspartate to form carbamoyl aspartate and inorganic phosphate, the committed step in the de novo pyrimidine nucleotide biosynthesis pathway. In Phocaeicola vulgatus (strain ATCC 8482 / DSM 1447 / JCM 5826 / CCUG 4940 / NBRC 14291 / NCTC 11154) (Bacteroides vulgatus), this protein is Aspartate carbamoyltransferase catalytic subunit.